An 824-amino-acid polypeptide reads, in one-letter code: Intraflagellar transport protein 88 homolog (824 aa).

Residues 113 to 134 (FDPLSQSRGPASPLEAKKKDSP) form a disordered region. TPR repeat units follow at residues 197 to 230 (YSVL…KMFS), 233 to 266 (GILK…VPSV), 272 to 305 (IKIM…APNL), 307 to 338 (AGYN…PLEI), 415 to 448 (NDLE…DSRV), 450 to 483 (SAAA…DRYN), 484 to 517 (PAAL…DSSC), 518 to 551 (TEAL…LRNS), 552 to 585 (AEVL…IPTD), 586 to 619 (PQVL…FPCN), 620 to 653 (IEVI…QPTQ), and 654 to 687 (VKWQ…FPEN). Residues 724 to 824 (EQRIKSGRDG…EELGDDLLPE (101 aa)) form a disordered region. Positions 748–757 (DSGQNYSASS) are enriched in polar residues. The span at 797–808 (ERPKTAAKKRID) shows a compositional bias: basic and acidic residues. The span at 809–824 (EDDFADEELGDDLLPE) shows a compositional bias: acidic residues.

In terms of assembly, component of the IFT complex B, at least composed of IFT20, IFT22, IFT25, IFT27, IFT46, IFT52, TRAF3IP1/IFT54, IFT57, IFT74, IFT80, IFT81, and IFT88. Interacts with IFT20, IFT22, IFT25, IFT27, IFT52, TRAF3IP1, IFT74, IFT80 and IFT81. Interacts with IFT172. Interacts with IFT57. Interacts with IFT46. Interacts with IFT70B. Interacts with C2CD3. Interacts with ENTR1 (via N-terminus). Interacts with LRRC56. Interacts with DZIP1. Interacts with CCDC38. Interacts with CCDC146. Interacts with CFAP53. As to expression, expressed in the heart, brain, liver, lung, kidney, skeletal muscle and pancreas.

Its subcellular location is the cytoplasm. The protein resides in the cytoskeleton. It is found in the microtubule organizing center. It localises to the centrosome. The protein localises to the centriole. Its subcellular location is the cell projection. The protein resides in the cilium. It is found in the cilium basal body. It localises to the flagellum. In terms of biological role, positively regulates primary cilium biogenesis. Also involved in autophagy since it is required for trafficking of ATG16L and the expansion of the autophagic compartment. This is Intraflagellar transport protein 88 homolog (IFT88) from Homo sapiens (Human).